The sequence spans 417 residues: Cobalamin binding intrinsic factor (417 aa).

A signal peptide spans 1–22; the sequence is MAWFSLHLLHLLWAAAGTSTWA. Cystine bridges form between Cys26–Cys246, Cys103–Cys288, and Cys143–Cys182. N-linked (GlcNAc...) asparagine glycosylation is present at Asn100. Asp171 contacts cob(II)alamin. Position 191 is a phosphoserine (Ser191). The N-linked (GlcNAc...) asparagine glycan is linked to Asn209. Asp222 and Gln270 together coordinate cob(II)alamin. Residues Asn311 and Asn330 are each glycosylated (N-linked (GlcNAc...) asparagine). Residues 365–370 and 386–395 contribute to the cob(II)alamin site; these read SWGLVV and WQFLSGKTPL. A glycan (N-linked (GlcNAc...) asparagine) is linked at Asn413.

This sequence belongs to the eukaryotic cobalamin transport proteins family. In terms of assembly, interacts with CUBN (via CUB domains).

It is found in the secreted. Promotes absorption of the essential vitamin cobalamin (Cbl) in the ileum. After interaction with CUBN, the CBLIF-cobalamin complex is internalized via receptor-mediated endocytosis. The sequence is that of Cobalamin binding intrinsic factor (CBLIF) from Canis lupus familiaris (Dog).